Reading from the N-terminus, the 297-residue chain is Trimeric intracellular cation channel type A (297 aa).

Residues 1–18 are Lumenal-facing; sequence MDLISSLSLGELALSFSR. Residues 19-39 form a helical membrane-spanning segment; that stretch reads VPLFPVFDLSYFIVSIIYLKY. At 40-51 the chain is on the cytoplasmic side; that stretch reads EPGSVELSRRHP. Residues 52-72 form a helical membrane-spanning segment; sequence VASWLCAMLHCFGSYILADLL. At 73-85 the chain is on the lumenal side; the sequence is LGEPIIDYFSNSS. Gly-74 serves as a coordination point for Ca(2+). The chain crosses the membrane as a helical span at residues 86–106; sequence SILLASGVWYLIFFCPLDLFY. Residues 107–143 are Cytoplasmic-facing; it reads KCVCFLPVKLIFVAMKEVVRVRKIAVGIHHAHHYHHG. A 1,2-diacyl-sn-glycero-3-phospho-(1D-myo-inositol-4,5-bisphosphate) is bound by residues Lys-122 and Arg-126. The helical transmembrane segment at 144–164 threads the bilayer; that stretch reads WFIMIATGWVKGSGVALLSNL. The Lumenal portion of the chain corresponds to 165-177; it reads EQLLRGVWKPETN. Residues 178–198 form a helical membrane-spanning segment; it reads EILHMSFPTKASLYGAILFTL. At 199-208 the chain is on the cytoplasmic side; sequence QQTRWLPVSK. The chain crosses the membrane as a helical span at residues 209–229; the sequence is ASLIFVFTMFMVSCKVFLTAT. Residues 230–233 lie on the Lumenal side of the membrane; the sequence is HSHS. Residues 234-254 traverse the membrane as a helical segment; sequence SPFDVLEGYICPVLFGATWGG. Residues 255–297 lie on the Cytoplasmic side of the membrane; that stretch reads DHHHDNHGAPHGMGLGTQHSGLPAKAKEELSEGFRKKKTKKAD. Residues 259–297 form a disordered region; the sequence is DNHGAPHGMGLGTQHSGLPAKAKEELSEGFRKKKTKKAD. Basic and acidic residues predominate over residues 279 to 288; the sequence is KAKEELSEGF.

It belongs to the TMEM38 family. In terms of assembly, homotrimer; conformation seems to be controled by binding to diacylglycerol (DAG).

Its subcellular location is the sarcoplasmic reticulum membrane. It is found in the nucleus membrane. The enzyme catalyses K(+)(in) = K(+)(out). Its activity is regulated as follows. Channel activity is activated by a change of voltage within the sarcoplasmic reticulum lumen and blocked by luminal high Ca(2+) levels. Intracellular monovalent cation channel required for maintenance of rapid intracellular calcium release. Acts as a potassium counter-ion channel that functions in synchronization with calcium release from intracellular stores. Opened by a change of voltage within the sarcoplasmic reticulum lumen. In Rattus norvegicus (Rat), this protein is Trimeric intracellular cation channel type A.